A 475-amino-acid polypeptide reads, in one-letter code: ATP synthase subunit beta (475 aa).

148–155 is an ATP binding site; sequence GGAGVGKT.

It belongs to the ATPase alpha/beta chains family. As to quaternary structure, F-type ATPases have 2 components, CF(1) - the catalytic core - and CF(0) - the membrane proton channel. CF(1) has five subunits: alpha(3), beta(3), gamma(1), delta(1), epsilon(1). CF(0) has three main subunits: a(1), b(2) and c(9-12). The alpha and beta chains form an alternating ring which encloses part of the gamma chain. CF(1) is attached to CF(0) by a central stalk formed by the gamma and epsilon chains, while a peripheral stalk is formed by the delta and b chains.

The protein localises to the cell inner membrane. The catalysed reaction is ATP + H2O + 4 H(+)(in) = ADP + phosphate + 5 H(+)(out). In terms of biological role, produces ATP from ADP in the presence of a proton gradient across the membrane. The catalytic sites are hosted primarily by the beta subunits. This chain is ATP synthase subunit beta, found in Psychrobacter sp. (strain PRwf-1).